The following is a 580-amino-acid chain: Probable inositol transporter 2 (580 aa).

12 helical membrane passes run 36 to 56, 71 to 91, 106 to 126, 129 to 149, 156 to 176, 189 to 209, 275 to 295, 315 to 335, 343 to 363, 452 to 472, 490 to 510, and 521 to 541; these read GIGG…LLYI, EMIV…GGWA, FLFL…LLVV, VFVG…ISEA, GALV…SYLI, WMLG…FTLP, GLIA…NTVM, LLSL…IYFI, LLII…GVFY, FGWF…PGMG, ICGG…AQSF, and WTFL…MVCV.

It belongs to the major facilitator superfamily. Sugar transporter (TC 2.A.1.1) family. In terms of tissue distribution, expressed in the tapetum, but not in pollen grains. Detected in leaf vascular tissue and in roots.

It is found in the cell membrane. With respect to regulation, inhibited by nickel and to a lesser extent by cobalt. In terms of biological role, plasma membrane inositol-proton symporter. Specific for several inositol epimers, such as myoinositol and scylloinositol. D-chiroinositol, mucoinositol, alloinositol and pinitol are also transported with a lower activity. Not active with galactinol and phytate. This Arabidopsis thaliana (Mouse-ear cress) protein is Probable inositol transporter 2 (INT2).